Here is a 657-residue protein sequence, read N- to C-terminus: Protein PSK SIMULATOR 1 (657 aa).

Composition is skewed to polar residues over residues 1–15, 26–39, 62–76, and 540–556; these read MGGLCSRSSSVNNAP, HLNNNASDLNSHSG, ESFSFPIVSSGSHPQ, and RSPNQKTIQLSSGSHNP. 2 disordered regions span residues 1–80 and 534–559; these read MGGL…NIED and PVKSPIRSPNQKTIQLSSGSHNPSMG. A lipid anchor (N-myristoyl glycine) is attached at G2.

It is found in the nucleus. Functionally, promotes seedling growth probably via the regulation of phytosulfokine (PSK) signaling; PSK are peptide phytohormones acting as growth factors. Together with PSI2 and PSI3, required during vegetative growth and reproduction. May also have a function in carbohydrate metabolism. This chain is Protein PSK SIMULATOR 1, found in Arabidopsis thaliana (Mouse-ear cress).